We begin with the raw amino-acid sequence, 570 residues long: Urease subunit alpha (570 aa).

Ni(2+) is bound by residues histidine 137, histidine 139, and lysine 220. Lysine 220 carries the post-translational modification N6-carboxylysine. A substrate-binding site is contributed by histidine 222. Histidine 249 and histidine 275 together coordinate Ni(2+). Histidine 323 acts as the Proton donor in catalysis. Aspartate 363 is a Ni(2+) binding site.

Belongs to the metallo-dependent hydrolases superfamily. Urease alpha subunit family. In terms of assembly, heterotrimer of UreA (gamma), UreB (beta) and UreC (alpha) subunits. Three heterotrimers associate to form the active enzyme. Ni cation serves as cofactor. Post-translationally, carboxylation allows a single lysine to coordinate two nickel ions.

It is found in the cytoplasm. The catalysed reaction is urea + 2 H2O + H(+) = hydrogencarbonate + 2 NH4(+). Its pathway is nitrogen metabolism; urea degradation; CO(2) and NH(3) from urea (urease route): step 1/1. This chain is Urease subunit alpha, found in Lachnoclostridium phytofermentans (strain ATCC 700394 / DSM 18823 / ISDg) (Clostridium phytofermentans).